The chain runs to 482 residues: Bifunctional protein GlmU (482 aa).

A pyrophosphorylase region spans residues 1-238 (MSAIRPAAVV…HREIAGINNR (238 aa)). Residues 12–15 (LAAG), K26, Q79, and 84–85 (GT) each bind UDP-N-acetyl-alpha-D-glucosamine. A Mg(2+)-binding site is contributed by D110. Positions 147, 163, 178, and 236 each coordinate UDP-N-acetyl-alpha-D-glucosamine. Mg(2+) is bound at residue N236. Residues 239 to 259 (VQLAEARRILNDRLLTRAMLA) are linker. The interval 260–482 (GVTVVDPATT…VASRKPEGED (223 aa)) is N-acetyltransferase. Positions 341 and 359 each coordinate UDP-N-acetyl-alpha-D-glucosamine. H371 acts as the Proton acceptor in catalysis. 2 residues coordinate UDP-N-acetyl-alpha-D-glucosamine: Y374 and N385. Acetyl-CoA contacts are provided by residues A388, 394 to 395 (NY), S413, A431, and R448.

This sequence in the N-terminal section; belongs to the N-acetylglucosamine-1-phosphate uridyltransferase family. The protein in the C-terminal section; belongs to the transferase hexapeptide repeat family. Homotrimer. Mg(2+) serves as cofactor.

The protein resides in the cytoplasm. The catalysed reaction is alpha-D-glucosamine 1-phosphate + acetyl-CoA = N-acetyl-alpha-D-glucosamine 1-phosphate + CoA + H(+). The enzyme catalyses N-acetyl-alpha-D-glucosamine 1-phosphate + UTP + H(+) = UDP-N-acetyl-alpha-D-glucosamine + diphosphate. It functions in the pathway nucleotide-sugar biosynthesis; UDP-N-acetyl-alpha-D-glucosamine biosynthesis; N-acetyl-alpha-D-glucosamine 1-phosphate from alpha-D-glucosamine 6-phosphate (route II): step 2/2. Its pathway is nucleotide-sugar biosynthesis; UDP-N-acetyl-alpha-D-glucosamine biosynthesis; UDP-N-acetyl-alpha-D-glucosamine from N-acetyl-alpha-D-glucosamine 1-phosphate: step 1/1. It participates in bacterial outer membrane biogenesis; LPS lipid A biosynthesis. In terms of biological role, catalyzes the last two sequential reactions in the de novo biosynthetic pathway for UDP-N-acetylglucosamine (UDP-GlcNAc). The C-terminal domain catalyzes the transfer of acetyl group from acetyl coenzyme A to glucosamine-1-phosphate (GlcN-1-P) to produce N-acetylglucosamine-1-phosphate (GlcNAc-1-P), which is converted into UDP-GlcNAc by the transfer of uridine 5-monophosphate (from uridine 5-triphosphate), a reaction catalyzed by the N-terminal domain. This Streptomyces avermitilis (strain ATCC 31267 / DSM 46492 / JCM 5070 / NBRC 14893 / NCIMB 12804 / NRRL 8165 / MA-4680) protein is Bifunctional protein GlmU.